Reading from the N-terminus, the 60-residue chain is Mating pheromone En-2 (60 aa).

4 cysteine pairs are disulfide-bonded: Cys11-Cys39, Cys24-Cys35, Cys31-Cys57, and Cys36-Cys48.

Its subcellular location is the secreted. Functionally, mating ciliate pheromones (or gamones) are diffusible extracellular communication signals that distinguish different intraspecific classes of cells commonly referred to as 'mating types'. They prepare the latter for conjugation by changing their cell surface properties. The polypeptide is Mating pheromone En-2 (Euplotes nobilii (Ciliate)).